The chain runs to 112 residues: Seminal vesicle secretory protein 4 (112 aa).

The signal sequence occupies residues 1–21 (MKSTSLFLCSLLLLLVTGAIG). The tract at residues 26 to 112 (EKYSQSEEVV…RSRFAQDVLN (87 aa)) is disordered. Low complexity-rich tracts occupy residues 36–47 (SESFASGPSSGS) and 85–97 (RSSG…GESS).

The protein belongs to the SVP2/SVP5/SVP6 family. As to expression, testis.

It is found in the secreted. The protein localises to the extracellular space. The chain is Seminal vesicle secretory protein 4 (Svs4) from Rattus norvegicus (Rat).